Reading from the N-terminus, the 180-residue chain is Cell division protein SepF (180 aa).

A disordered region spans residues 21-40; that stretch reads LDDDYDDGRAVGRDDRRAMH. Residues 27–40 are compositionally biased toward basic and acidic residues; the sequence is DGRAVGRDDRRAMH.

This sequence belongs to the SepF family. Homodimer. Interacts with FtsZ.

The protein localises to the cytoplasm. Cell division protein that is part of the divisome complex and is recruited early to the Z-ring. Probably stimulates Z-ring formation, perhaps through the cross-linking of FtsZ protofilaments. Its function overlaps with FtsA. The sequence is that of Cell division protein SepF from Frankia casuarinae (strain DSM 45818 / CECT 9043 / HFP020203 / CcI3).